The chain runs to 176 residues: MAVNKGYTGYNKELNAMAATHAYIRLSTLMSQIESWQATRASVLTHLGVMLNGVSKLGERSFFSRTKRFGAHTSDGDEIFCDLGGEAVTQILSRLTVALQSARGEGAQTRNAKRGAAPGTSQVENEEQGQTDQTLAISNAVAELMIFVRTKDFTMNECYTQDSFEAKYNLKWEGSS.

The tract at residues 103–132 (RGEGAQTRNAKRGAAPGTSQVENEEQGQTD) is disordered.

Belongs to the virgaviridae capsid protein family.

Its subcellular location is the virion. Capsid protein self-assembles to form rod-shaped virions about 20 nm in diameter with a central canal enclosing the viral genomic RNA. Isoform N-CP does not seem to be required for virion formation and systemic infection in host plant. The chain is Capsid protein (CP) from Hordeum vulgare (Barley).